The primary structure comprises 219 residues: N-(5'-phosphoribosyl)anthranilate isomerase (219 aa).

The protein belongs to the TrpF family.

The enzyme catalyses N-(5-phospho-beta-D-ribosyl)anthranilate = 1-(2-carboxyphenylamino)-1-deoxy-D-ribulose 5-phosphate. Its pathway is amino-acid biosynthesis; L-tryptophan biosynthesis; L-tryptophan from chorismate: step 3/5. This chain is N-(5'-phosphoribosyl)anthranilate isomerase, found in Bordetella avium (strain 197N).